We begin with the raw amino-acid sequence, 585 residues long: S-antigen protein (585 aa).

A signal peptide spans 1-23 (MNRILSVTLCLFFIYLYIYKTYG). Residues 51-585 (NGKGQKYEDL…NSIINMLIGM (535 aa)) form a disordered region. A compositionally biased stretch (acidic residues) spans 59 to 85 (DLEEEKEGENDDEEDSNSEESNNDEEN). A compositionally biased stretch (basic and acidic residues) spans 96–113 (QETHGSEDEVSNGREDKV). 56 tandem repeats follow at residues 102–109 (EDEVSNGR), 110–117 (EDKVSNGG), 118–125 (EDEVSNGG), 126–133 (EDEVSNGR), 134–141 (EDKVSNGG), 142–149 (EDEVSNGR), 150–157 (EDKVSNGG), 158–165 (EDEVSNGR), 166–173 (EDKVSNGG), 174–181 (EDEVSNGR), 182–189 (EDKVSNGG), 190–197 (EDEVSNGR), 198–205 (EDKVSNGR), 206–213 (EDKVSNGG), 214–221 (EDEVSNGR), 222–229 (EDKVSNGR), 230–237 (EDKVSNGG), 238–245 (EDEVSNGR), 246–253 (EDKVSNGG), 254–261 (EDEVSNGR), 262–269 (EDKVSNGG), 270–277 (EDEVSNGR), 278–285 (EDKVSNGR), 286–293 (EDEVSNGR), 294–301 (EDKVSNGG), 302–309 (EDEVSNGR), 310–317 (EDKVSNGG), 318–325 (EDEVSNGR), 326–333 (EDKVSNGR), 334–341 (EDKVSNGG), 342–349 (EDEVSNGR), 350–357 (EDKVSNGG), 358–365 (EDEVSNGR), 366–373 (EDKVSNGR), 374–381 (EDKVSNGR), 382–389 (EDEVSNGR), 390–397 (EDKVSNGG), 398–405 (EDEVSNGR), 406–413 (EDKVSNGR), 414–421 (EDKVSNGG), 422–429 (EDEVSNGR), 430–437 (EDKVSNGG), 438–445 (EDEVSNGR), 446–453 (EDKVSNGR), 454–461 (EDKVSNGR), 462–469 (EDKVSNGG), 470–477 (EDEVSNGG), 478–485 (EDEVSNGR), 486–493 (EDKVSNGG), 494–501 (EDEVSNGR), 502–509 (EDKVSNGG), 510–517 (EDEVSNGR), 518–525 (EDKVSNGG), 526–533 (EDEVSNGR), 534–541 (EDKVSNGR), and 542–549 (EDEVSNGR). Residues 102–549 (EDEVSNGRED…GREDEVSNGR (448 aa)) form a 56 X 8 AA tandem repeats of E-D-[EK]-V-S-N-G-[RG] region. A compositionally biased stretch (acidic residues) spans 117 to 129 (GEDEVSNGGEDEV). 2 stretches are compositionally biased toward basic and acidic residues: residues 194–209 (SNGR…EDKV) and 218–233 (SNGR…EDKV). The segment covering 274–297 (SNGREDKVSNGREDEVSNGREDKV) has biased composition (basic and acidic residues). Positions 322–337 (SNGREDKVSNGREDKV) are enriched in basic and acidic residues. Basic and acidic residues-rich tracts occupy residues 362 to 393 (SNGR…EDKV) and 402 to 417 (SNGR…EDKV). The span at 442–465 (SNGREDKVSNGREDKVSNGREDKV) shows a compositional bias: basic and acidic residues. The span at 469–481 (GEDEVSNGGEDEV) shows a compositional bias: acidic residues. Basic and acidic residues-rich tracts occupy residues 530–553 (SNGR…EDKG) and 560–569 (ELSHNSESHT). The segment covering 576–585 (NSIINMLIGM) has biased composition (low complexity).

The protein localises to the parasitophorous vacuole. In terms of biological role, s antigens are soluble heat-stable proteins present in the sera of some infected individuals. The chain is S-antigen protein from Plasmodium falciparum (isolate 3D7).